We begin with the raw amino-acid sequence, 513 residues long: Protein CYCLOPS (513 aa).

Disordered regions lie at residues 329–380 (QGRT…STQN) and 395–435 (DDRK…AEAK). Residues 333-347 (ASGEPSQSESSAAAP) are compositionally biased toward low complexity. Residues 359–380 (PSNSNQTLGDSSWKQVGESTQN) are compositionally biased toward polar residues. 2 consecutive short sequence motifs (nuclear localization signal) follow at residues 397–400 (RKRK) and 421–424 (KKRR). Positions 447–513 (MQAILKRCEN…ERILSETGKI (67 aa)) form a coiled coil.

It belongs to the CYCLOPS family. As to quaternary structure, forms homodimers. Interacts with CCAMK. As to expression, highly expressed in roots. Expressed in root hairs and nodules. Not detected in leaves or flowers.

The protein localises to the nucleus. Its function is as follows. Involved symbiotic signaling. Required for root infection by symbiotic rhizobia, infection thread (IT) formation, and nodule development. Required for proper induction of early nodulin gene expression. Probably not involved in nodule organogenesis. Involved in arbuscular mycorrhizal (AM) symbiosis. Required for fungal infection of the outer cortical cell layers, and for arbuscule development during the AM symbiosis. Acts downstream of CCAMK. Required for symbiosome formation (i.e. the release of the bacteria from the ITs) and subsequent symbiosome development. Required for the expression of the nodule-specific RPG gene, which controls proper IT growth and is essential for symbiosome formation. Acts upstream of ERN1, a transcriptional regulator required for nodulation. The sequence is that of Protein CYCLOPS from Medicago truncatula (Barrel medic).